The chain runs to 101 residues: HssA/B-like protein 40 (101 aa).

The segment at Met-1 to Ser-26 is disordered.

Belongs to the hssA/B family.

The chain is HssA/B-like protein 40 (hssl40) from Dictyostelium discoideum (Social amoeba).